We begin with the raw amino-acid sequence, 1051 residues long: Serine/threonine-protein kinase ULK1 (1051 aa).

In terms of domain architecture, Protein kinase spans 16-278 (FSRKDLIGHG…FDEFFHHPFL (263 aa)). ATP is bound by residues 22 to 30 (IGHGAFAVV) and K46. The Proton acceptor role is filled by D138. K162 bears the N6-acetyllysine mark. Disordered regions lie at residues 283 to 323 (PIKK…EMPQ), 335 to 358 (AGFL…DDFV), and 394 to 554 (GLES…CRLH). An interaction with GABARAP and GABARAPL2 region spans residues 287 to 416 (SPPVPVPSYP…TCSSSPSPSG (130 aa)). Low complexity-rich tracts occupy residues 295 to 318 (YPSS…PPSL), 340 to 349 (GSRDSGGSSK), and 400 to 423 (RTPS…PFSS). S317 is subject to Phosphoserine; by AMPK. Phosphoserine occurs at positions 403 and 450. The segment covering 437–459 (QVHNYQRIEQNLQSPTQQQTARS) has biased composition (polar residues). T456 carries the phosphothreonine modification. Phosphoserine occurs at positions 467, 477, 479, and 521. S555 carries the phosphoserine; by AMPK modification. At T574 the chain carries Phosphothreonine. K606 carries the N6-acetyllysine modification. T635 bears the Phosphothreonine mark. Phosphoserine; by AMPK is present on S637. A Phosphoserine modification is found at S638. Disordered regions lie at residues 661–686 (PDLS…DTRG) and 727–787 (APSA…TGSS). A compositionally biased stretch (gly residues) spans 731-745 (GFGGTLHPGARGGGA). Phosphoserine; by MTOR is present on S757. At S774 the chain carries Phosphoserine. A compositionally biased stretch (low complexity) spans 774-787 (SVGSSSSLGSTGSS). At S777 the chain carries Phosphoserine; by AMPK. Residues 829-1051 (PDLPEETLME…LSALLSGVYA (223 aa)) form a C-terminal domain; mediates interaction with SESN2 region.

This sequence belongs to the protein kinase superfamily. Ser/Thr protein kinase family. APG1/unc-51/ULK1 subfamily. Interacts with GABARAP and GABARAPL2. Interacts (via C-terminus) with ATG13. Part of a complex consisting of ATG13, ATG101, ULK1 and RB1CC1. Associates with the mammalian target of rapamycin complex 1 (mTORC1) through an interaction with RPTOR; the association depends on nutrient conditions and is reduced during starvation. Interacts with FEZ1; SCOC interferes with FEZ1-binding. Interacts with TBC1D14. Interacts (phosphorylated form) with TRIM5. When phosphorylated at Ser-317, interacts with MEFV and BECN1 simultaneously. Interacts with TRIM21 and IRF3, in the presence of TRIM21. Interacts with SESN2. Interacts with SQSTM1. Interacts with C9orf72. Interacts with WDR45. Interacts with ATG13; this interaction is increased in the absence of TMEM39A. Interacts with WIPI2. Interacts with ATP2A2. Interacts with AMBRA1. Interacts with Irgm1; promoting the coassembly of ULK1 and BECN1. Autophosphorylated. Phosphorylated under nutrient-rich conditions; dephosphorylated during starvation or following treatment with rapamycin. In response to nutrient limitation, phosphorylated and activated by AMPK, leading to activate autophagy. Under nutrient sufficiency, phosphorylated by MTOR/mTOR, disrupting the interaction with AMPK and preventing activation of ULK1. In terms of processing, ubiquitinated via 'Lys-63'-linkage by a complex composed of AMBRA1 and TRAF6 following autophagy induction, promoting ULK1 stability and kinase activity. Deubiquitinated by USP20; leading to ULK1 stability and autophagy initiation. Post-translationally, acetylated by KAT5/TIP60 under autophagy induction, promoting protein kinase activity.

Its subcellular location is the cytoplasm. It localises to the cytosol. The protein resides in the preautophagosomal structure. The enzyme catalyses L-seryl-[protein] + ATP = O-phospho-L-seryl-[protein] + ADP + H(+). The catalysed reaction is L-threonyl-[protein] + ATP = O-phospho-L-threonyl-[protein] + ADP + H(+). Acetylation by KAT5/TIP60 stimulates the protein kinase activity. The protein kinase activity is activated by unanchored 'Lys-63'-linked polyubiquitin chains: unanchored 'Lys-63'-linked polyubiquitin chains are catalyzed by TRIM32 in an AMBRA1-dependent manner. Serine/threonine-protein kinase involved in autophagy in response to starvation. Acts upstream of phosphatidylinositol 3-kinase PIK3C3 to regulate the formation of autophagophores, the precursors of autophagosomes. Part of regulatory feedback loops in autophagy: acts both as a downstream effector and negative regulator of mammalian target of rapamycin complex 1 (mTORC1) via interaction with RPTOR. Activated via phosphorylation by AMPK and also acts as a regulator of AMPK by mediating phosphorylation of AMPK subunits PRKAA1, PRKAB2 and PRKAG1, leading to negatively regulate AMPK activity. May phosphorylate ATG13/KIAA0652 and RPTOR; however such data need additional evidences. Plays a role early in neuronal differentiation and is required for granule cell axon formation. Also phosphorylates SESN2 and SQSTM1 to regulate autophagy. Phosphorylates FLCN, promoting autophagy. Phosphorylates AMBRA1 in response to autophagy induction, releasing AMBRA1 from the cytoskeletal docking site to induce autophagosome nucleation. Phosphorylates ATG4B, leading to inhibit autophagy by decreasing both proteolytic activation and delipidation activities of ATG4B. This chain is Serine/threonine-protein kinase ULK1 (Ulk1), found in Mus musculus (Mouse).